The primary structure comprises 308 residues: Acetylglutamate kinase (308 aa).

Substrate-binding positions include 73–74, R95, and N194; that span reads GG.

It belongs to the acetylglutamate kinase family. ArgB subfamily.

It localises to the cytoplasm. It carries out the reaction N-acetyl-L-glutamate + ATP = N-acetyl-L-glutamyl 5-phosphate + ADP. It participates in amino-acid biosynthesis; L-arginine biosynthesis; N(2)-acetyl-L-ornithine from L-glutamate: step 2/4. In terms of biological role, catalyzes the ATP-dependent phosphorylation of N-acetyl-L-glutamate. In Rhodococcus jostii (strain RHA1), this protein is Acetylglutamate kinase.